Consider the following 283-residue polypeptide: Pantothenate synthetase (283 aa).

26–33 is an ATP binding site; the sequence is MGNLHEGH. The Proton donor role is filled by His33. Gln57 provides a ligand contact to (R)-pantoate. Gln57 is a binding site for beta-alanine. 144 to 147 serves as a coordination point for ATP; it reads GKKD. Residue Gln150 coordinates (R)-pantoate. ATP is bound by residues Ile173 and 181–184; that span reads LSSR.

This sequence belongs to the pantothenate synthetase family. In terms of assembly, homodimer.

Its subcellular location is the cytoplasm. It carries out the reaction (R)-pantoate + beta-alanine + ATP = (R)-pantothenate + AMP + diphosphate + H(+). It functions in the pathway cofactor biosynthesis; (R)-pantothenate biosynthesis; (R)-pantothenate from (R)-pantoate and beta-alanine: step 1/1. In terms of biological role, catalyzes the condensation of pantoate with beta-alanine in an ATP-dependent reaction via a pantoyl-adenylate intermediate. The protein is Pantothenate synthetase of Polynucleobacter necessarius subsp. necessarius (strain STIR1).